The following is a 54-amino-acid chain: Large ribosomal subunit protein bL33B (54 aa).

The protein belongs to the bacterial ribosomal protein bL33 family.

In Saccharopolyspora erythraea (strain ATCC 11635 / DSM 40517 / JCM 4748 / NBRC 13426 / NCIMB 8594 / NRRL 2338), this protein is Large ribosomal subunit protein bL33B.